The following is a 543-amino-acid chain: Carboxypeptidase Y homolog A (543 aa).

Positions Met-1 to Ala-17 are cleaved as a signal peptide. Positions Pro-18–Lys-124 are excised as a propeptide. 5 disulfide bridges follow: Cys-179/Cys-419, Cys-313/Cys-327, Cys-337/Cys-360, Cys-344/Cys-353, and Cys-382/Cys-389. N-linked (GlcNAc...) asparagine glycosylation is present at Asn-210. Ser-266 is an active-site residue. The active site involves Asp-458. Asn-509 carries N-linked (GlcNAc...) asparagine glycosylation. The active site involves His-520.

This sequence belongs to the peptidase S10 family.

Its subcellular location is the vacuole. The catalysed reaction is Release of a C-terminal amino acid with broad specificity.. In terms of biological role, vacuolar carboxypeptidase involved in degradation of small peptides. Digests preferentially peptides containing an aliphatic or hydrophobic residue in P1' position, as well as methionine, leucine or phenylalanine in P1 position of ester substrate. The sequence is that of Carboxypeptidase Y homolog A (cpyA) from Aspergillus fumigatus (strain ATCC MYA-4609 / CBS 101355 / FGSC A1100 / Af293) (Neosartorya fumigata).